We begin with the raw amino-acid sequence, 455 residues long: Secreted triacylglycerol lipase LIP4 (455 aa).

The N-terminal stretch at 1–19 is a signal peptide; the sequence is MKLNLFILGLLTLAAHAYA. Asparagine 98 is a glycosylation site (N-linked (GlcNAc...) asparagine). Cysteines 115 and 284 form a disulfide. Serine 197 serves as the catalytic Nucleophile. Asparagine 230 is a glycosylation site (N-linked (GlcNAc...) asparagine). Active-site residues include aspartate 344 and histidine 378. A disulfide bond links cysteine 360 and cysteine 406.

The protein belongs to the AB hydrolase superfamily. Lipase family. Class Lip subfamily.

It is found in the secreted. The protein resides in the cell wall. The catalysed reaction is a triacylglycerol + H2O = a diacylglycerol + a fatty acid + H(+). It catalyses the reaction a monoacylglycerol + H2O = glycerol + a fatty acid + H(+). It carries out the reaction a diacylglycerol + H2O = a monoacylglycerol + a fatty acid + H(+). Secreted lipase involved in Dandruff and seborrheic dermatitis (D/SD) probably via lipase-mediated breakdown of sebaceous lipids and release of irritating free fatty acids. Has triacylglycerol lipase activity and is able to hydrolyze triolein. Mostly converts monoolein to di- and triolein, while free fatty acids are only produced in low amounts. The polypeptide is Secreted triacylglycerol lipase LIP4 (Malassezia globosa (strain ATCC MYA-4612 / CBS 7966) (Dandruff-associated fungus)).